Here is a 578-residue protein sequence, read N- to C-terminus: NADPH oxidase 4 (578 aa).

Topologically, residues 1–16 (MAVSWRSWLANEGVKH) are cytoplasmic. Residues 17 to 37 (LCLFIWLSMNVLLFWKTFLLY) traverse the membrane as a helical segment. Topologically, residues 38–62 (NQGPEYHYLHQMLGLGLCLSRASAS) are extracellular. The Ferric oxidoreductase domain occupies 58-303 (RASASVLNLN…YCAERLYRYI (246 aa)). The helical transmembrane segment at 63 to 83 (VLNLNCSLILLPMCRTLLAYL) threads the bilayer. Topologically, residues 84-103 (RGSQKVPSRRTRRLLDKSRT) are cytoplasmic. Residues 104–124 (FHITCGVTICIFSGVHVAAHL) form a helical membrane-spanning segment. At 125 to 154 (VNALNFSVNYSEDFVELNAARYRDEDPRKL) the chain is on the extracellular side. The N-linked (GlcNAc...) asparagine glycan is linked to Asn133. The helical transmembrane segment at 155 to 175 (LFTTVPGLTGVCMVVVLFLMI) threads the bilayer. At 176–188 (TASTYAIRVSNYD) the chain is on the cytoplasmic side. A helical transmembrane segment spans residues 189-209 (IFWYTHNLFFVFYMLLTLHVS). Residues 210–424 (GGLLKYQTNL…SPFEESLNYE (215 aa)) lie on the Extracellular side of the membrane. The E-loop; essential for H2O2 generating catalytic activity stretch occupies residues 218-273 (NLDTHPPGCISLNRTSSQNISLPEYFSEHFHEPFPEGFSKPAEFTQHKFVKICMEE). An N-linked (GlcNAc...) asparagine glycan is attached at Asn230. Residues 248 to 575 (HEPFPEGFSK…YGTRFEYNKE (328 aa)) form a mediates interaction with TLR4 region. The region spanning 304–419 (RSNKPVTIIS…DGPFGSPFEE (116 aa)) is the FAD-binding FR-type domain. Residues 425–445 (VSLCVAGGIGVTPFASILNTL) traverse the membrane as a helical segment. The Cytoplasmic segment spans residues 446–578 (LDDWKPYKLR…RFEYNKESFS (133 aa)).

In terms of assembly, interacts with protein disulfide isomerase. Interacts with, relocalizes and stabilizes CYBA/p22phox. Interacts with TLR4. Interacts with PPP1R15A. Interacts with LRRC8A; this interaction prevents the ubiquitin-mediated degradation of LRRC8A. Heme serves as cofactor. In terms of processing, deubiquitinated by USP19. N-glycosylated and glycosylation is required for its proper function. Post-translationally, N-glycosylated. Expressed by distal tubular cells in kidney cortex and in endothelial cells (at protein level). Widely expressed. Strongly expressed in kidney and to a lower extent in heart, adipocytes, hepatoma, endothelial cells, skeletal muscle, brain, several brain tumor cell lines and airway epithelial cells.

It localises to the cytoplasm. Its subcellular location is the endoplasmic reticulum membrane. The protein resides in the cell membrane. It is found in the cell junction. The protein localises to the focal adhesion. It localises to the nucleus. Its subcellular location is the nucleolus. The protein resides in the perinuclear region. It catalyses the reaction NADPH + 2 O2 = 2 superoxide + NADP(+) + H(+). It carries out the reaction NADPH + O2 + H(+) = H2O2 + NADP(+). Its activity is regulated as follows. Inhibited by plumbagin. Activated by phorbol 12-myristate 13-acetate (PMA). Activated by insulin. Inhibited by diphenylene iodonium. Its function is as follows. NADPH oxidase that catalyzes predominantly the reduction of oxygen to H2O2. Can also catalyze to a smaller extent, the reduction of oxygen to superoxide. May function as an oxygen sensor regulating the KCNK3/TASK-1 potassium channel and HIF1A activity. May regulate insulin signaling cascade. May play a role in apoptosis, bone resorption and lipolysaccharide-mediated activation of NFKB. May produce superoxide in the nucleus and play a role in regulating gene expression upon cell stimulation. Promotes ferroptosis, reactive oxygen species production and reduced glutathione (GSH) levels by activating NLRP3 inflammasome activation and cytokine release. Functionally, NADPH oxidase that catalyzes the generation of superoxide from molecular oxygen utilizing NADPH as an electron donor. Involved in redox signaling in vascular cells. Modulates the nuclear activation of ERK1/2 and the ELK1 transcription factor, and is capable of inducing nuclear DNA damage. Lacks superoxide-generating NADPH oxidase activity. The protein is NADPH oxidase 4 (NOX4) of Homo sapiens (Human).